Reading from the N-terminus, the 240-residue chain is Ubiquinone biosynthesis O-methyltransferase (240 aa).

The S-adenosyl-L-methionine site is built by arginine 44, glycine 64, aspartate 85, and methionine 129.

The protein belongs to the methyltransferase superfamily. UbiG/COQ3 family.

It carries out the reaction a 3-demethylubiquinol + S-adenosyl-L-methionine = a ubiquinol + S-adenosyl-L-homocysteine + H(+). The enzyme catalyses a 3-(all-trans-polyprenyl)benzene-1,2-diol + S-adenosyl-L-methionine = a 2-methoxy-6-(all-trans-polyprenyl)phenol + S-adenosyl-L-homocysteine + H(+). The protein operates within cofactor biosynthesis; ubiquinone biosynthesis. O-methyltransferase that catalyzes the 2 O-methylation steps in the ubiquinone biosynthetic pathway. This is Ubiquinone biosynthesis O-methyltransferase from Escherichia coli O157:H7.